The primary structure comprises 220 residues: Lipoprotein-releasing system ATP-binding protein LolD (220 aa).

The 220-residue stretch at 1–220 (MRAVDIHKSY…YRMKDGQWQS (220 aa)) folds into the ABC transporter domain. Residue 37–44 (GASGAGKS) coordinates ATP.

The protein belongs to the ABC transporter superfamily. Lipoprotein translocase (TC 3.A.1.125) family. In terms of assembly, the complex is composed of two ATP-binding proteins (LolD) and two transmembrane proteins (LolC and LolE).

It is found in the cell inner membrane. Functionally, part of the ABC transporter complex LolCDE involved in the translocation of mature outer membrane-directed lipoproteins, from the inner membrane to the periplasmic chaperone, LolA. Responsible for the formation of the LolA-lipoprotein complex in an ATP-dependent manner. This Bdellovibrio bacteriovorus (strain ATCC 15356 / DSM 50701 / NCIMB 9529 / HD100) protein is Lipoprotein-releasing system ATP-binding protein LolD.